The chain runs to 455 residues: Transcriptional regulatory protein FlbD (455 aa).

Residues 2–114 (RLLVVGKLNG…LIAAVLAAVT (113 aa)) form the Response regulatory domain. The Sigma-54 factor interaction domain occupies 120–349 (MVVRDPAMEQ…LENAMHRAVL (230 aa)). Residues 148–155 (GESGSGKE) and 211–220 (ADGGTLLLDE) each bind ATP. A DNA-binding region (H-T-H motif) is located at residues 416-435 (RTHAANILGISIRTLRNKLK).

The protein localises to the cytoplasm. In terms of biological role, activation of sigma-54-dependent flagellar gene promoters and strong negative autoregulatory effects on its own promoter. The synthesis and function of FlbD in C.crescentus is controlled by an internal cell-cycle clock. This chain is Transcriptional regulatory protein FlbD (flbD), found in Caulobacter vibrioides (strain ATCC 19089 / CIP 103742 / CB 15) (Caulobacter crescentus).